Here is a 309-residue protein sequence, read N- to C-terminus: Taste receptor type 2 member 31 (309 aa).

Residues 1 to 2 lie on the Extracellular side of the membrane; it reads MT. A helical transmembrane segment spans residues 3-23; sequence TFIPIIFSSVVVVLFVIGNFA. Residues 24-55 are Cytoplasmic-facing; the sequence is NGFIALVNSIERVKRQKISFADQILTALAVSR. A helical membrane pass occupies residues 56–76; the sequence is VGLLWVLLLNWYSTVFNPAFY. Residues 77–100 are Extracellular-facing; the sequence is SVEVRTTAYNVWAVTGHFSNWLAT. The helical transmembrane segment at 101-121 threads the bilayer; sequence SLSIFYLLKIANFSNLIFLHL. Over 122 to 126 the chain is Cytoplasmic; that stretch reads KRRVK. A helical transmembrane segment spans residues 127 to 147; sequence SVILVMLLGPLLFLACQLFVI. Residues 148–181 are Extracellular-facing; it reads NMKEIVRTKEYEGNLTWKIKLRSAVYLSDATVTT. An N-linked (GlcNAc...) asparagine glycan is attached at Asn161. Residues 182–202 form a helical membrane-spanning segment; the sequence is LGNLVPFTLTLLCFLLLICSL. The Cytoplasmic segment spans residues 203–229; it reads CKHLKKMQLHGKGSQDPSTKVHIKALQ. A helical membrane pass occupies residues 230–250; the sequence is TVIFFLLLCAVYFLSIMISVW. The Extracellular portion of the chain corresponds to 251–259; it reads SFGSLENKP. The chain crosses the membrane as a helical span at residues 260 to 280; that stretch reads VFMFCKAIRFSYPSIHPFILI. The Cytoplasmic portion of the chain corresponds to 281-309; sequence WGNKKLKQTFLSVLRQVRYWVKGEKPSSP.

The protein belongs to the G-protein coupled receptor T2R family. As to expression, expressed in subsets of taste receptor cells of the tongue and exclusively in gustducin-positive cells.

Its subcellular location is the membrane. Its function is as follows. Receptor that may play a role in the perception of bitterness and is gustducin-linked. May play a role in sensing the chemical composition of the gastrointestinal content. The activity of this receptor may stimulate alpha gustducin, mediate PLC-beta-2 activation and lead to the gating of TRPM5. Activated by the sulfonyl amide sweeteners saccharin and acesulfame K. This chain is Taste receptor type 2 member 31 (TAS2R31), found in Homo sapiens (Human).